A 480-amino-acid polypeptide reads, in one-letter code: Plant UBX domain-containing protein 10 (480 aa).

2 disordered regions span residues 47–78 (DASSSAVDGGGNNRDHDHNNATVTPDYPPRGI) and 335–383 (ADQA…AARV). Residues 330 to 389 (RAALEADQAREQQRQEEKERLEREAAEAERKLKEEEEARERAAREAEERQAARVRMRQEK) adopt a coiled-coil conformation. Positions 336–383 (DQAREQQRQEEKERLEREAAEAERKLKEEEEARERAAREAEERQAARV) are enriched in basic and acidic residues. One can recognise a UBX domain in the interval 399–477 (KGPDVTQVLV…GLHPQASLFI (79 aa)).

The sequence is that of Plant UBX domain-containing protein 10 from Arabidopsis thaliana (Mouse-ear cress).